A 173-amino-acid polypeptide reads, in one-letter code: Photosystem I assembly protein Ycf3 (173 aa).

TPR repeat units follow at residues 35-68 (AFVY…EEDP), 72-105 (SYIL…NPRM), and 120-153 (GEKA…APNN).

This sequence belongs to the Ycf3 family.

It localises to the cellular thylakoid membrane. Its function is as follows. Essential for the assembly of the photosystem I (PSI) complex. May act as a chaperone-like factor to guide the assembly of the PSI subunits. This Rippkaea orientalis (strain PCC 8801 / RF-1) (Cyanothece sp. (strain PCC 8801)) protein is Photosystem I assembly protein Ycf3.